Consider the following 237-residue polypeptide: Flagellar L-ring protein (237 aa).

The N-terminal stretch at 1 to 24 is a signal peptide; the sequence is MNRPGFPRFSVLIASLCGITLLSG. Cys25 carries N-palmitoyl cysteine lipidation. Cys25 is lipidated: S-diacylglycerol cysteine.

It belongs to the FlgH family. The basal body constitutes a major portion of the flagellar organelle and consists of four rings (L,P,S, and M) mounted on a central rod.

The protein localises to the cell outer membrane. Its subcellular location is the bacterial flagellum basal body. In terms of biological role, assembles around the rod to form the L-ring and probably protects the motor/basal body from shearing forces during rotation. The polypeptide is Flagellar L-ring protein (Pseudomonas syringae pv. tomato (strain ATCC BAA-871 / DC3000)).